Reading from the N-terminus, the 81-residue chain is UPF0729 protein C18orf32 homolog (81 aa).

The span at 45–58 shows a compositional bias: polar residues; sequence AASDQKVSEKSNGT. The tract at residues 45-81 is disordered; it reads AASDQKVSEKSNGTCKPESNGEATANGSTIAADKKTD.

It belongs to the UPF0729 family.

In Anoplopoma fimbria (Sablefish), this protein is UPF0729 protein C18orf32 homolog.